The primary structure comprises 216 residues: Uracil phosphoribosyltransferase (216 aa).

5-phospho-alpha-D-ribose 1-diphosphate-binding positions include arginine 85, arginine 110, and 135 to 143 (DPMVATGYS). Uracil contacts are provided by residues isoleucine 200 and 205–207 (GDA). Position 206 (aspartate 206) interacts with 5-phospho-alpha-D-ribose 1-diphosphate.

Belongs to the UPRTase family. Mg(2+) serves as cofactor.

The catalysed reaction is UMP + diphosphate = 5-phospho-alpha-D-ribose 1-diphosphate + uracil. The protein operates within pyrimidine metabolism; UMP biosynthesis via salvage pathway; UMP from uracil: step 1/1. Allosterically activated by GTP. In terms of biological role, catalyzes the conversion of uracil and 5-phospho-alpha-D-ribose 1-diphosphate (PRPP) to UMP and diphosphate. The protein is Uracil phosphoribosyltransferase of Burkholderia thailandensis (strain ATCC 700388 / DSM 13276 / CCUG 48851 / CIP 106301 / E264).